Reading from the N-terminus, the 139-residue chain is Large-conductance mechanosensitive channel (139 aa).

The next 2 membrane-spanning stretches (helical) occupy residues 9 to 29 (AFAVKGNVVDMAVGIIIGAAF) and 79 to 99 (IQSVIDFVIVAFAIFMGVKAI).

Belongs to the MscL family. As to quaternary structure, homopentamer.

The protein resides in the cell inner membrane. In terms of biological role, channel that opens in response to stretch forces in the membrane lipid bilayer. May participate in the regulation of osmotic pressure changes within the cell. This chain is Large-conductance mechanosensitive channel, found in Pseudomonas fluorescens (strain SBW25).